The sequence spans 387 residues: Phosphoglycerate kinase (387 aa).

Substrate is bound by residues 21-23 (DLN), Arg36, and 59-62 (HLGR). The residue at position 84 (Lys84) is an N6-acetyllysine. The substrate site is built by Arg113 and Arg146. ATP-binding positions include Lys197, Glu314, and 340 to 343 (GGDT).

The protein belongs to the phosphoglycerate kinase family. Monomer.

Its subcellular location is the cytoplasm. The catalysed reaction is (2R)-3-phosphoglycerate + ATP = (2R)-3-phospho-glyceroyl phosphate + ADP. The protein operates within carbohydrate degradation; glycolysis; pyruvate from D-glyceraldehyde 3-phosphate: step 2/5. The chain is Phosphoglycerate kinase (pgk) from Escherichia coli O157:H7.